The sequence spans 329 residues: Tyrosine--tRNA ligase (329 aa).

Positions 31, 157, 161, 164, and 179 each coordinate L-tyrosine. The 'KMSKS' region motif lies at K220–S224. ATP is bound at residue K223.

It belongs to the class-I aminoacyl-tRNA synthetase family. TyrS type 4 subfamily. As to quaternary structure, homodimer.

The protein resides in the cytoplasm. The catalysed reaction is tRNA(Tyr) + L-tyrosine + ATP = L-tyrosyl-tRNA(Tyr) + AMP + diphosphate + H(+). Catalyzes the attachment of tyrosine to tRNA(Tyr) in a two-step reaction: tyrosine is first activated by ATP to form Tyr-AMP and then transferred to the acceptor end of tRNA(Tyr). The chain is Tyrosine--tRNA ligase from Picrophilus torridus (strain ATCC 700027 / DSM 9790 / JCM 10055 / NBRC 100828 / KAW 2/3).